The sequence spans 362 residues: UV excision repair protein RAD23 homolog A (362 aa).

In terms of domain architecture, Ubiquitin-like spans M1–T81. 2 disordered regions span residues K80 to G160 and G201 to G227. Over residues P88 to S109 the composition is skewed to low complexity. Residue K122 forms a Glycyl lysine isopeptide (Lys-Gly) (interchain with G-Cter in ubiquitin) linkage. A phosphoserine mark is found at S123, S128, S133, S136, and S138. Residues E126–S144 are compositionally biased toward low complexity. The 41-residue stretch at S161–G201 folds into the UBA 1 domain. Residues S205, S294, and S356 each carry the phosphoserine modification. The 41-residue stretch at P317–Q357 folds into the UBA 2 domain.

It belongs to the RAD23 family. Interacts with XPC; the interaction is suggesting the existence of a functional equivalent variant XPC complex. Interacts with PSMD4 and PSMC5. Interacts with ATXN3. Interacts with UBQLN2.

Its subcellular location is the nucleus. Functionally, multiubiquitin chain receptor involved in modulation of proteasomal degradation. Binds to 'Lys-48'-linked polyubiquitin chains in a length-dependent manner and with a lower affinity to 'Lys-63'-linked polyubiquitin chains. Proposed to be capable to bind simultaneously to the 26S proteasome and to polyubiquitinated substrates and to deliver ubiquitinated proteins to the proteasome. In terms of biological role, involved in nucleotide excision repair and is thought to be functional equivalent for RAD23B in global genome nucleotide excision repair (GG-NER) by association with XPC. In vitro, XPC:RAD23A dimer has NER activity. Can stabilize XPC. The chain is UV excision repair protein RAD23 homolog A (RAD23A) from Bos taurus (Bovine).